The sequence spans 512 residues: Intermediate filament family orphan 2 (512 aa).

An IF rod domain is found at Asn-50–Asn-479. The disordered stretch occupies residues Lys-473–Ser-512. Over residues Ser-480 to Gly-492 the composition is skewed to low complexity. The segment covering Glu-496–Ser-512 has biased composition (acidic residues).

This sequence belongs to the intermediate filament family.

The protein is Intermediate filament family orphan 2 (Iffo2) of Mus musculus (Mouse).